The following is a 249-amino-acid chain: Proteasome subunit alpha type-7-1 (249 aa).

Ser177 carries the post-translational modification Phosphoserine.

It belongs to the peptidase T1A family. In terms of assembly, the 26S proteasome consists of a 20S proteasome core and two 19S regulatory subunits. The 20S proteasome core is composed of 28 subunits that are arranged in four stacked rings, resulting in a barrel-shaped structure. The two end rings are each formed by seven alpha subunits, and the two central rings are each formed by seven beta subunits. The catalytic chamber with the active sites is on the inside of the barrel. Interacts with PI31; this interaction is reduced by PI31 ADP-ribosylation.

It is found in the cytoplasm. It localises to the nucleus. The proteasome is a multicatalytic proteinase complex which is characterized by its ability to cleave peptides with Arg, Phe, Tyr, Leu, and Glu adjacent to the leaving group at neutral or slightly basic pH. The proteasome has an ATP-dependent proteolytic activity. The polypeptide is Proteasome subunit alpha type-7-1 (Prosalpha4) (Drosophila melanogaster (Fruit fly)).